A 95-amino-acid chain; its full sequence is Large ribosomal subunit protein uL23 (95 aa).

It belongs to the universal ribosomal protein uL23 family. As to quaternary structure, part of the 50S ribosomal subunit. Contacts protein L29, and trigger factor when it is bound to the ribosome.

Its function is as follows. One of the early assembly proteins it binds 23S rRNA. One of the proteins that surrounds the polypeptide exit tunnel on the outside of the ribosome. Forms the main docking site for trigger factor binding to the ribosome. The polypeptide is Large ribosomal subunit protein uL23 (Leuconostoc mesenteroides subsp. mesenteroides (strain ATCC 8293 / DSM 20343 / BCRC 11652 / CCM 1803 / JCM 6124 / NCDO 523 / NBRC 100496 / NCIMB 8023 / NCTC 12954 / NRRL B-1118 / 37Y)).